The primary structure comprises 411 residues: Phosphoglycerate kinase (411 aa).

Substrate-binding positions include 22–24 (DFN), arginine 37, 60–63 (HLSR), arginine 123, and arginine 165. ATP-binding positions include lysine 216, glutamate 339, and 366–369 (GGDS).

Belongs to the phosphoglycerate kinase family. Monomer.

It is found in the cytoplasm. It catalyses the reaction (2R)-3-phosphoglycerate + ATP = (2R)-3-phospho-glyceroyl phosphate + ADP. It participates in carbohydrate degradation; glycolysis; pyruvate from D-glyceraldehyde 3-phosphate: step 2/5. This chain is Phosphoglycerate kinase (pgk), found in Mycoplasma genitalium (strain ATCC 33530 / DSM 19775 / NCTC 10195 / G37) (Mycoplasmoides genitalium).